We begin with the raw amino-acid sequence, 569 residues long: Urease subunit beta (569 aa).

Residues 131–569 (GGIDTHIHFI…VSLGQLYCLF (439 aa)) form the Urease domain. The Ni(2+) site is built by histidine 136, histidine 138, and lysine 219. Position 219 is an N6-carboxylysine (lysine 219). Histidine 221 is a substrate binding site. Ni(2+) is bound by residues histidine 248 and histidine 274. The active-site Proton donor is histidine 322. Aspartate 362 contributes to the Ni(2+) binding site.

The protein belongs to the metallo-dependent hydrolases superfamily. Urease alpha subunit family. Heterohexamer of 3 UreA (alpha) and 3 UreB (beta) subunits. Ni cation is required as a cofactor. Post-translationally, carboxylation allows a single lysine to coordinate two nickel ions.

It localises to the cytoplasm. The catalysed reaction is urea + 2 H2O + H(+) = hydrogencarbonate + 2 NH4(+). Its pathway is nitrogen metabolism; urea degradation; CO(2) and NH(3) from urea (urease route): step 1/1. The polypeptide is Urease subunit beta (Helicobacter hepaticus (strain ATCC 51449 / 3B1)).